The following is a 43-amino-acid chain: Delta/kappa-actitoxin-Avd4a (43 aa).

Cystine bridges form between cysteine 4/cysteine 39, cysteine 6/cysteine 32, and cysteine 22/cysteine 40.

This sequence belongs to the sea anemone type 3 (BDS) potassium channel toxin family.

Its subcellular location is the secreted. It localises to the nematocyst. Functionally, acts as a gating modifier on both Kv and Nav ion channels, and also acts on blood pressure. Voltage-dependently inhibits voltage-gated potassium channels Kv3 (Kv3.1/KCNC1, Kv3.2/KCNC2 and Kv3.4/KCNC4) and slows inactivation of the voltage-gated sodium channel Nav1.7/SCN9A. Inhibits all Kv3.1, Kv3.2 and Kv3.4 by about 50% when tested at a voltage of +40 mV (45%, 48% and 56%, respectively). May act by binding residues in voltage-sensing domains S3b and S4 of Kv3. On sodium channel, tests have been done on human Nav1.7/SCN9A (expressed in HEK293 cells) (EC(50)=3 nM) and rat SCG neurons that mostly carry Nav1.7 channels (EC(50)=300 nM). This toxin also reduces blood pressure. The polypeptide is Delta/kappa-actitoxin-Avd4a (Anemonia sulcata (Mediterranean snakelocks sea anemone)).